Here is a 323-residue protein sequence, read N- to C-terminus: Acetyl-coenzyme A carboxylase carboxyl transferase subunit alpha (323 aa).

The CoA carboxyltransferase C-terminal domain maps to 39 to 293 (RLSKKSQQLT…RRALADSLRQ (255 aa)).

Belongs to the AccA family. As to quaternary structure, acetyl-CoA carboxylase is a heterohexamer composed of biotin carboxyl carrier protein (AccB), biotin carboxylase (AccC) and two subunits each of ACCase subunit alpha (AccA) and ACCase subunit beta (AccD).

The protein resides in the cytoplasm. The enzyme catalyses N(6)-carboxybiotinyl-L-lysyl-[protein] + acetyl-CoA = N(6)-biotinyl-L-lysyl-[protein] + malonyl-CoA. It participates in lipid metabolism; malonyl-CoA biosynthesis; malonyl-CoA from acetyl-CoA: step 1/1. Functionally, component of the acetyl coenzyme A carboxylase (ACC) complex. First, biotin carboxylase catalyzes the carboxylation of biotin on its carrier protein (BCCP) and then the CO(2) group is transferred by the carboxyltransferase to acetyl-CoA to form malonyl-CoA. The chain is Acetyl-coenzyme A carboxylase carboxyl transferase subunit alpha from Burkholderia orbicola (strain AU 1054).